The primary structure comprises 866 residues: Ribosome biogenesis protein BOP1 homolog (866 aa).

Disordered stretches follow at residues 1–180 (MVAN…EETR) and 214–241 (PPEA…EEDI). Composition is skewed to acidic residues over residues 37 to 52 (VDDE…DEEN), 60 to 146 (GNDE…LEEP), and 167 to 179 (TAED…DEET). WD repeat units follow at residues 527-566 (GHTD…CIRT), 568-608 (PTGD…SLLV), 697-735 (KSKG…LLKK), 738-777 (PSCK…RPYQ), 781-820 (LHHS…DLLQ), and 836-866 (VNDF…RLYT).

It belongs to the WD repeat BOP1/ERB1 family.

Its subcellular location is the nucleus. It localises to the nucleolus. The protein resides in the nucleoplasm. Its function is as follows. Required for maturation of ribosomal RNAs and formation of the large ribosomal subunit. The chain is Ribosome biogenesis protein BOP1 homolog from Aedes aegypti (Yellowfever mosquito).